The sequence spans 914 residues: Coatomer subunit beta' (914 aa).

7 WD repeats span residues serine 13–glutamate 54, valine 55–serine 94, alanine 97–arginine 136, glycine 140–threonine 180, glycine 183–threonine 224, glycine 227–cysteine 266, and alanine 352–phenylalanine 390.

This sequence belongs to the WD repeat COPB2 family. Oligomeric complex that consists of at least the alpha, beta, beta', gamma, delta, epsilon and zeta subunits.

It localises to the cytoplasm. It is found in the golgi apparatus membrane. The protein localises to the cytoplasmic vesicle. The protein resides in the COPI-coated vesicle membrane. Functionally, the coatomer is a cytosolic protein complex that binds to dilysine motifs and reversibly associates with Golgi non-clathrin-coated vesicles, which further mediate biosynthetic protein transport from the ER, via the Golgi up to the trans Golgi network. Coatomer complex is required for budding from Golgi membranes, and is essential for the retrograde Golgi-to-ER transport of dilysine-tagged proteins. The chain is Coatomer subunit beta' from Drosophila melanogaster (Fruit fly).